The following is a 264-amino-acid chain: NAD-capped RNA hydrolase NudC (264 aa).

Zn(2+)-binding residues include cysteine 99 and cysteine 102. Glutamate 112 serves as a coordination point for substrate. Cysteine 117 and cysteine 120 together coordinate Zn(2+). Tyrosine 125 provides a ligand contact to substrate. The Nudix hydrolase domain maps to 126 to 253; it reads PVICPSIIVA…TIARKLIHAT (128 aa). 3 residues coordinate a divalent metal cation: alanine 162, glutamate 178, and glutamate 182. The Nudix box signature appears at 163 to 184; sequence GFVEVGETFEQAVQREVFEETG. A substrate-binding site is contributed by 196-203; the sequence is QPWAFPNS. Glutamate 223 provides a ligand contact to a divalent metal cation. Substrate is bound at residue alanine 246.

The protein belongs to the Nudix hydrolase family. NudC subfamily. As to quaternary structure, homodimer. Mg(2+) serves as cofactor. It depends on Mn(2+) as a cofactor. The cofactor is Zn(2+).

The catalysed reaction is a 5'-end NAD(+)-phospho-ribonucleoside in mRNA + H2O = a 5'-end phospho-adenosine-phospho-ribonucleoside in mRNA + beta-nicotinamide D-ribonucleotide + 2 H(+). It catalyses the reaction NAD(+) + H2O = beta-nicotinamide D-ribonucleotide + AMP + 2 H(+). It carries out the reaction NADH + H2O = reduced beta-nicotinamide D-ribonucleotide + AMP + 2 H(+). Functionally, mRNA decapping enzyme that specifically removes the nicotinamide adenine dinucleotide (NAD) cap from a subset of mRNAs by hydrolyzing the diphosphate linkage to produce nicotinamide mononucleotide (NMN) and 5' monophosphate mRNA. The NAD-cap is present at the 5'-end of some mRNAs and stabilizes RNA against 5'-processing. Has preference for mRNAs with a 5'-end purine. Catalyzes the hydrolysis of a broad range of dinucleotide pyrophosphates. This is NAD-capped RNA hydrolase NudC from Haemophilus influenzae (strain PittGG).